A 208-amino-acid chain; its full sequence is Thymidylate kinase (208 aa).

10-17 (GLEGAGKS) contacts ATP.

This sequence belongs to the thymidylate kinase family.

It catalyses the reaction dTMP + ATP = dTDP + ADP. Phosphorylation of dTMP to form dTDP in both de novo and salvage pathways of dTTP synthesis. The polypeptide is Thymidylate kinase (Glaesserella parasuis serovar 5 (strain SH0165) (Haemophilus parasuis)).